The following is an 89-amino-acid chain: uncharacterized protein (89 aa).

This sequence to M.jannaschii MJ1436.

This is an uncharacterized protein from Methanothermobacter thermautotrophicus (strain ATCC 29096 / DSM 1053 / JCM 10044 / NBRC 100330 / Delta H) (Methanobacterium thermoautotrophicum).